The primary structure comprises 186 residues: MYLSKIICKKVPMKLLCTRNAATVSAAATNALQKEQPSGEAMIARPRLVDLDKRWGIMSQEEKDGLITDLYARQKQPWTTLSIEEKKAAYWIAFGEHGPRAFSHISQKTVFWGTVAGLTIGVVLFGLIRTQAAPSPRTMTREWQEKSNEYMKENKINPISGEASEGFKGRGQISGGIFSPSEKDKK.

The transit peptide at 1-20 (MYLSKIICKKVPMKLLCTRN) directs the protein to the mitochondrion. The Mitochondrial matrix segment spans residues 21–107 (AATVSAAATN…GPRAFSHISQ (87 aa)). Residues 108-128 (KTVFWGTVAGLTIGVVLFGLI) traverse the membrane as a helical segment. Residues 129-186 (RTQAAPSPRTMTREWQEKSNEYMKENKINPISGEASEGFKGRGQISGGIFSPSEKDKK) lie on the Mitochondrial intermembrane side of the membrane. The tract at residues 149–186 (EYMKENKINPISGEASEGFKGRGQISGGIFSPSEKDKK) is disordered.

This sequence belongs to the cytochrome c oxidase IV family. As to quaternary structure, component of the cytochrome c oxidase (complex IV, CIV), a multisubunit enzyme composed of a catalytic core of 3 subunits and seevral supernumerary subunits. The complex exists as a monomer or a dimer and forms supercomplexes (SCs) in the inner mitochondrial membrane with ubiquinol-cytochrome c oxidoreductase (cytochrome b-c1 complex, complex III, CIII).

Its subcellular location is the mitochondrion inner membrane. Its pathway is energy metabolism; oxidative phosphorylation. Its function is as follows. Component of the cytochrome c oxidase, the last enzyme in the mitochondrial electron transport chain which drives oxidative phosphorylation. The respiratory chain contains 3 multisubunit complexes succinate dehydrogenase (complex II, CII), ubiquinol-cytochrome c oxidoreductase (cytochrome b-c1 complex, complex III, CIII) and cytochrome c oxidase (complex IV, CIV), that cooperate to transfer electrons derived from NADH and succinate to molecular oxygen, creating an electrochemical gradient over the inner membrane that drives transmembrane transport and the ATP synthase. Cytochrome c oxidase is the component of the respiratory chain that catalyzes the reduction of oxygen to water. Electrons originating from reduced cytochrome c in the intermembrane space (IMS) are transferred via the dinuclear copper A center (CU(A)) of subunit 2 and heme A of subunit 1 to the active site in subunit 1, a binuclear center (BNC) formed by heme A3 and copper B (CU(B)). The BNC reduces molecular oxygen to 2 water molecules using 4 electrons from cytochrome c in the IMS and 4 protons from the mitochondrial matrix. The chain is Cytochrome c oxidase polypeptide 5, mitochondrial (cox5) from Schizosaccharomyces pombe (strain 972 / ATCC 24843) (Fission yeast).